The following is an 89-amino-acid chain: Cell division topological specificity factor (89 aa).

Belongs to the MinE family.

Functionally, prevents the cell division inhibition by proteins MinC and MinD at internal division sites while permitting inhibition at polar sites. This ensures cell division at the proper site by restricting the formation of a division septum at the midpoint of the long axis of the cell. This Sodalis glossinidius (strain morsitans) protein is Cell division topological specificity factor.